Consider the following 197-residue polypeptide: MQQIVLASTSPYRKALLEKLTVPFVCASPDIDETPRIGENAIDLVIRLAESKARALATHYTNHLIIGSDQVCVLGNSITGKPHNKINATRQLQQASGKCVSFFTGLALFNSATQSIQSIAEPFDVYFRTLTEAEIDGYLEKEQPWNCAGSFKSEGLGITLFERLSGRDPNTLIGLPLIALTQMLQKEGLNPLTVRNE.

Asp-69 (proton acceptor) is an active-site residue.

Belongs to the Maf family. YceF subfamily. A divalent metal cation is required as a cofactor.

It localises to the cytoplasm. The enzyme catalyses N(7)-methyl-GTP + H2O = N(7)-methyl-GMP + diphosphate + H(+). Functionally, nucleoside triphosphate pyrophosphatase that hydrolyzes 7-methyl-GTP (m(7)GTP). May have a dual role in cell division arrest and in preventing the incorporation of modified nucleotides into cellular nucleic acids. This chain is 7-methyl-GTP pyrophosphatase, found in Pectobacterium atrosepticum (strain SCRI 1043 / ATCC BAA-672) (Erwinia carotovora subsp. atroseptica).